The primary structure comprises 338 residues: RNA 3'-terminal phosphate cyclase (338 aa).

ATP-binding positions include Gln-103 and 283–287; that span reads YLADQ. His-308 (tele-AMP-histidine intermediate) is an active-site residue.

It belongs to the RNA 3'-terminal cyclase family. Type 1 subfamily.

The protein localises to the cytoplasm. It catalyses the reaction a 3'-end 3'-phospho-ribonucleotide-RNA + ATP = a 3'-end 2',3'-cyclophospho-ribonucleotide-RNA + AMP + diphosphate. Its function is as follows. Catalyzes the conversion of 3'-phosphate to a 2',3'-cyclic phosphodiester at the end of RNA. The mechanism of action of the enzyme occurs in 3 steps: (A) adenylation of the enzyme by ATP; (B) transfer of adenylate to an RNA-N3'P to produce RNA-N3'PP5'A; (C) and attack of the adjacent 2'-hydroxyl on the 3'-phosphorus in the diester linkage to produce the cyclic end product. The biological role of this enzyme is unknown but it is likely to function in some aspects of cellular RNA processing. The chain is RNA 3'-terminal phosphate cyclase from Shigella boydii serotype 18 (strain CDC 3083-94 / BS512).